A 144-amino-acid chain; its full sequence is Antigenic protein SchS21 (144 aa).

A glycan (N-linked (GlcNAc...) asparagine) is linked at Asn36. Residues 91-105 are igE-binding epitope; it reads VKQMWPAESRKPMSG.

As to quaternary structure, homodimer. The cofactor is Mg(2+).

The protein resides in the secreted. Has exodeoxyribonuclease activity with lambda-DNA and salmon testes dsDNA. No activity with circular plasmid DNA. The physiological role of this enzyme may be to degrade environmental DNA, and thus mobilize nitrogen for uptake. This chain is Antigenic protein SchS21, found in Stachybotrys chartarum (Toxic black mold).